The following is a 419-amino-acid chain: Arginine biosynthesis bifunctional protein ArgJ (419 aa).

6 residues coordinate substrate: threonine 154, lysine 180, threonine 191, glutamate 277, asparagine 414, and threonine 419. Threonine 191 functions as the Nucleophile in the catalytic mechanism.

This sequence belongs to the ArgJ family. As to quaternary structure, heterotetramer of two alpha and two beta chains.

The protein localises to the cytoplasm. It carries out the reaction N(2)-acetyl-L-ornithine + L-glutamate = N-acetyl-L-glutamate + L-ornithine. The catalysed reaction is L-glutamate + acetyl-CoA = N-acetyl-L-glutamate + CoA + H(+). It functions in the pathway amino-acid biosynthesis; L-arginine biosynthesis; L-ornithine and N-acetyl-L-glutamate from L-glutamate and N(2)-acetyl-L-ornithine (cyclic): step 1/1. Its pathway is amino-acid biosynthesis; L-arginine biosynthesis; N(2)-acetyl-L-ornithine from L-glutamate: step 1/4. Functionally, catalyzes two activities which are involved in the cyclic version of arginine biosynthesis: the synthesis of N-acetylglutamate from glutamate and acetyl-CoA as the acetyl donor, and of ornithine by transacetylation between N(2)-acetylornithine and glutamate. In Thermosynechococcus vestitus (strain NIES-2133 / IAM M-273 / BP-1), this protein is Arginine biosynthesis bifunctional protein ArgJ.